The sequence spans 192 residues: 7-methyl-GTP pyrophosphatase (192 aa).

The Proton acceptor role is filled by aspartate 70.

Belongs to the Maf family. YceF subfamily. It depends on a divalent metal cation as a cofactor.

Its subcellular location is the cytoplasm. It catalyses the reaction N(7)-methyl-GTP + H2O = N(7)-methyl-GMP + diphosphate + H(+). In terms of biological role, nucleoside triphosphate pyrophosphatase that hydrolyzes 7-methyl-GTP (m(7)GTP). May have a dual role in cell division arrest and in preventing the incorporation of modified nucleotides into cellular nucleic acids. The protein is 7-methyl-GTP pyrophosphatase of Xanthomonas campestris pv. campestris (strain 8004).